The chain runs to 276 residues: Monoglyceride lipase homolog (276 aa).

The protein belongs to the orthopoxvirus OPG043 family.

This is Monoglyceride lipase homolog (OPG043) from Cynomys gunnisoni (Gunnison's prairie dog).